We begin with the raw amino-acid sequence, 437 residues long: Glutamate-1-semialdehyde 2,1-aminomutase (437 aa).

Lys-272 carries the post-translational modification N6-(pyridoxal phosphate)lysine.

It belongs to the class-III pyridoxal-phosphate-dependent aminotransferase family. HemL subfamily. Homodimer. Pyridoxal 5'-phosphate is required as a cofactor.

The protein resides in the cytoplasm. The enzyme catalyses (S)-4-amino-5-oxopentanoate = 5-aminolevulinate. It functions in the pathway porphyrin-containing compound metabolism; protoporphyrin-IX biosynthesis; 5-aminolevulinate from L-glutamyl-tRNA(Glu): step 2/2. The chain is Glutamate-1-semialdehyde 2,1-aminomutase from Moorella thermoacetica (strain ATCC 39073 / JCM 9320).